Consider the following 119-residue polypeptide: uncharacterized protein (119 aa).

The protein localises to the mitochondrion. The protein resides in the nucleus. This is an uncharacterized protein from Schizosaccharomyces pombe (strain 972 / ATCC 24843) (Fission yeast).